Consider the following 160-residue polypeptide: Nascent polypeptide-associated complex subunit alpha (160 aa).

One can recognise an NAC-A/B domain in the interval 10–75 (TKGEKKTREA…HSFDDIASRL (66 aa)). A UBA domain is found at 120–159 (VNPKDVEVVMKETKASREKVVETLIATKNDLVSAVLELTT).

The protein belongs to the NAC-alpha family. In terms of assembly, part of the nascent polypeptide-associated complex (NAC), consisting of nacA and nacB.

It is found in the cytoplasm. Its subcellular location is the nucleus. Its function is as follows. Component of the nascent polypeptide-associated complex (NAC), a dynamic component of the ribosomal exit tunnel, protecting the emerging polypeptides from interaction with other cytoplasmic proteins to ensure appropriate nascent protein targeting. The NAC complex also promotes mitochondrial protein import by enhancing productive ribosome interactions with the outer mitochondrial membrane and blocks the inappropriate interaction of ribosomes translating non-secretory nascent polypeptides with translocation sites in the membrane of the endoplasmic reticulum. May also be involved in transcription regulation. This chain is Nascent polypeptide-associated complex subunit alpha (nacA), found in Dictyostelium discoideum (Social amoeba).